A 228-amino-acid polypeptide reads, in one-letter code: Cytidylate kinase (228 aa).

ATP is bound at residue 7 to 15 (GPVATGKST).

It belongs to the cytidylate kinase family. Type 1 subfamily.

Its subcellular location is the cytoplasm. It carries out the reaction CMP + ATP = CDP + ADP. It catalyses the reaction dCMP + ATP = dCDP + ADP. This Protochlamydia amoebophila (strain UWE25) protein is Cytidylate kinase.